We begin with the raw amino-acid sequence, 412 residues long: Imidazolonepropionase (412 aa).

Fe(3+)-binding residues include H71 and H73. Positions 71 and 73 each coordinate Zn(2+). Residues R80, Y143, and H176 each coordinate 4-imidazolone-5-propanoate. Position 143 (Y143) interacts with N-formimidoyl-L-glutamate. H241 is a binding site for Fe(3+). H241 is a Zn(2+) binding site. Position 244 (Q244) interacts with 4-imidazolone-5-propanoate. Fe(3+) is bound at residue D316. D316 is a binding site for Zn(2+). N-formimidoyl-L-glutamate is bound by residues N318 and G320. T321 provides a ligand contact to 4-imidazolone-5-propanoate.

The protein belongs to the metallo-dependent hydrolases superfamily. HutI family. Zn(2+) is required as a cofactor. It depends on Fe(3+) as a cofactor.

It is found in the cytoplasm. The enzyme catalyses 4-imidazolone-5-propanoate + H2O = N-formimidoyl-L-glutamate. It participates in amino-acid degradation; L-histidine degradation into L-glutamate; N-formimidoyl-L-glutamate from L-histidine: step 3/3. In terms of biological role, catalyzes the hydrolytic cleavage of the carbon-nitrogen bond in imidazolone-5-propanoate to yield N-formimidoyl-L-glutamate. It is the third step in the universal histidine degradation pathway. This chain is Imidazolonepropionase, found in Aromatoleum aromaticum (strain DSM 19018 / LMG 30748 / EbN1) (Azoarcus sp. (strain EbN1)).